Here is a 147-residue protein sequence, read N- to C-terminus: Large ribosomal subunit protein uL11 (147 aa).

The protein belongs to the universal ribosomal protein uL11 family. Part of the ribosomal stalk of the 50S ribosomal subunit. Interacts with L10 and the large rRNA to form the base of the stalk. L10 forms an elongated spine to which L12 dimers bind in a sequential fashion forming a multimeric L10(L12)X complex. One or more lysine residues are methylated.

In terms of biological role, forms part of the ribosomal stalk which helps the ribosome interact with GTP-bound translation factors. This Sorangium cellulosum (strain So ce56) (Polyangium cellulosum (strain So ce56)) protein is Large ribosomal subunit protein uL11.